The following is a 1008-amino-acid chain: Pre-mRNA-splicing factor SNU114 (1008 aa).

Position 85 is a phosphoserine (Ser-85). Position 88 is a phosphothreonine (Thr-88). A tr-type G domain is found at 131–338 (ERIINVGVIG…SYYYAHSIPS (208 aa)). The segment at 140–147 (GPLHSGKT) is G1. 140–147 (GPLHSGKT) lines the GTP pocket. The segment at 188–192 (GLSIK) is G2. The G3 stretch occupies residues 214-217 (DAPG). GTP is bound by residues 214–218 (DAPGH) and 268–271 (NKLD). A G4 region spans residues 268–271 (NKLD). Residues 315 to 317 (STK) form a G5 region. The tract at residues 504 to 536 (TSQSESRQKRQLHDISKTETSNEDEDEDDETPS) is disordered. Basic and acidic residues predominate over residues 509 to 520 (SRQKRQLHDISK). A compositionally biased stretch (acidic residues) spans 524-536 (SNEDEDEDDETPS).

It belongs to the TRAFAC class translation factor GTPase superfamily. Classic translation factor GTPase family. EF-G/EF-2 subfamily. Belongs to the CWC complex (or CEF1-associated complex), a spliceosome sub-complex reminiscent of a late-stage spliceosome composed of the U2, U5 and U6 snRNAs and at least BUD13, BUD31, BRR2, CDC40, CEF1, CLF1, CUS1, CWC2, CWC15, CWC21, CWC22, CWC23, CWC24, CWC25, CWC27, ECM2, HSH155, IST3, ISY1, LEA1, MSL1, NTC20, PRP8, PRP9, PRP11, PRP19, PRP21, PRP22, PRP45, PRP46, SLU7, SMB1, SMD1, SMD2, SMD3, SMX2, SMX3, SNT309, SNU114, SPP2, SYF1, SYF2, RSE1 and YJU2. Component of the U4/U6-U5 tri-snRNP complex composed of the U4, U6 and U5 snRNAs and at least PRP3, PRP4, PRP6, PRP8, PRP18, PRP31, PRP38, SNU13, SNU23, SNU66, SNU114, SPP381, SMB1, SMD1, SMD2, SMD3, SMX2, SMX3, LSM2, LSM3, LSM4, LSM5, LSM6, LSM7, LSM8, BRR2 and DIB1. Interacts (via C-terminus) with CWC21. Interacts (via N-terminus) with PRP8 (via SCwid domain).

The protein localises to the nucleus. Its function is as follows. Component of the U5 snRNP complex required for pre-mRNA splicing. Binds GTP. In Saccharomyces cerevisiae (strain ATCC 204508 / S288c) (Baker's yeast), this protein is Pre-mRNA-splicing factor SNU114 (SNU114).